We begin with the raw amino-acid sequence, 393 residues long: Riboflavin biosynthesis protein RibBA (393 aa).

Residues 1-200 form a DHBP synthase region; the sequence is MQFDNIDSAL…IDDLIEYRKK (200 aa). D-ribulose 5-phosphate contacts are provided by residues 27–28, Asp-32, 139–143, and Glu-163; these read RE and RNGHT. Glu-28 is a Mg(2+) binding site. His-142 contacts Mg(2+). Positions 201–393 are GTP cyclohydrolase II; that stretch reads LEPEIEFKAK…TKKIKMGHLI (193 aa). 249–253 is a GTP binding site; that stretch reads RLHSA. Positions 254, 265, and 267 each coordinate Zn(2+). Residues Gln-270, 291–293, and Thr-313 each bind GTP; that span reads EGR. Asp-325 serves as the catalytic Proton acceptor; for GTP cyclohydrolase activity. Arg-327 (nucleophile; for GTP cyclohydrolase activity) is an active-site residue. Residues Ser-348 and Lys-353 each contribute to the GTP site.

In the N-terminal section; belongs to the DHBP synthase family. The protein in the C-terminal section; belongs to the GTP cyclohydrolase II family. Mg(2+) serves as cofactor. Requires Mn(2+) as cofactor. Zn(2+) is required as a cofactor.

It catalyses the reaction D-ribulose 5-phosphate = (2S)-2-hydroxy-3-oxobutyl phosphate + formate + H(+). The enzyme catalyses GTP + 4 H2O = 2,5-diamino-6-hydroxy-4-(5-phosphoribosylamino)-pyrimidine + formate + 2 phosphate + 3 H(+). Its pathway is cofactor biosynthesis; riboflavin biosynthesis; 2-hydroxy-3-oxobutyl phosphate from D-ribulose 5-phosphate: step 1/1. It participates in cofactor biosynthesis; riboflavin biosynthesis; 5-amino-6-(D-ribitylamino)uracil from GTP: step 1/4. Functionally, catalyzes the conversion of D-ribulose 5-phosphate to formate and 3,4-dihydroxy-2-butanone 4-phosphate. In terms of biological role, catalyzes the conversion of GTP to 2,5-diamino-6-ribosylamino-4(3H)-pyrimidinone 5'-phosphate (DARP), formate and pyrophosphate. This is Riboflavin biosynthesis protein RibBA from Staphylococcus aureus (strain COL).